The chain runs to 267 residues: Zinc finger protein ZAT1 (267 aa).

A C2H2-type 1 zinc finger spans residues 5-27; the sequence is HKCKLCWKSFANGRALGGHMRSH. Disordered regions lie at residues 34–99 and 181–204; these read PSQP…ADIK and SHKK…KKKS. Residues 52-62 are compositionally biased toward basic and acidic residues; it reads QDRESETESSK. Basic residues predominate over residues 63 to 73; that stretch reads KPSRKRSRLNR. Residues 83–97 are compositionally biased toward basic and acidic residues; that stretch reads QSNEEGKSETARAAD. 2 C2H2-type zinc fingers span residues 160–182 and 209–231; these read FECE…RASH and HECP…KRSH.

It is found in the nucleus. Functionally, probable transcription factor that may be involved in stress responses. The protein is Zinc finger protein ZAT1 (ZAT1) of Arabidopsis thaliana (Mouse-ear cress).